The sequence spans 254 residues: Alcohol dehydrogenase (254 aa).

An NAD(+)-binding site is contributed by 10–33 (FVAGLGGIGLDTSREIVKSGPKNL). Residue Ser-138 participates in substrate binding. The Proton acceptor role is filled by Tyr-151.

This sequence belongs to the short-chain dehydrogenases/reductases (SDR) family. Homodimer.

It catalyses the reaction a primary alcohol + NAD(+) = an aldehyde + NADH + H(+). It carries out the reaction a secondary alcohol + NAD(+) = a ketone + NADH + H(+). In Drosophila affinidisjuncta (Fruit fly), this protein is Alcohol dehydrogenase (Adh).